Here is a 437-residue protein sequence, read N- to C-terminus: Ribosomal protein uS12 methylthiotransferase RimO (437 aa).

One can recognise an MTTase N-terminal domain in the interval 9-125 (PAIFLLSLGC…VLAAIGAHYC (117 aa)). Cys18, Cys54, Cys88, Cys149, Cys153, and Cys156 together coordinate [4Fe-4S] cluster. Residues 135 to 364 (LTPPHYAFLK…MELQESIAAS (230 aa)) form the Radical SAM core domain. In terms of domain architecture, TRAM spans 367 to 434 (RKLEGQTLTV…AYELFGRVGS (68 aa)).

The protein belongs to the methylthiotransferase family. RimO subfamily. It depends on [4Fe-4S] cluster as a cofactor.

The protein localises to the cytoplasm. It carries out the reaction L-aspartate(89)-[ribosomal protein uS12]-hydrogen + (sulfur carrier)-SH + AH2 + 2 S-adenosyl-L-methionine = 3-methylsulfanyl-L-aspartate(89)-[ribosomal protein uS12]-hydrogen + (sulfur carrier)-H + 5'-deoxyadenosine + L-methionine + A + S-adenosyl-L-homocysteine + 2 H(+). Catalyzes the methylthiolation of an aspartic acid residue of ribosomal protein uS12. In Chlorobaculum parvum (strain DSM 263 / NCIMB 8327) (Chlorobium vibrioforme subsp. thiosulfatophilum), this protein is Ribosomal protein uS12 methylthiotransferase RimO.